The primary structure comprises 386 residues: Methionine aminopeptidase 1 (386 aa).

Residues 6-59 (TRECETEGCHSEAKLQCPTCIKLGIQGSYFCSQECFKGSWATHKLLHKKAKEDK) form a C6H2-type zinc finger. 8 residues coordinate Zn(2+): cysteine 9, cysteine 14, cysteine 22, cysteine 25, cysteine 36, cysteine 40, histidine 48, and histidine 52. Histidine 202 contacts a protein. Residues aspartate 219, aspartate 230, and histidine 293 each coordinate Zn(2+). Histidine 300 lines the a protein pocket. Residues glutamate 326 and glutamate 357 each coordinate Zn(2+).

The protein belongs to the peptidase M24A family. Methionine aminopeptidase type 1 subfamily. As to quaternary structure, associates with the 60S ribosomal subunit of the 80S translational complex. Requires Zn(2+) as cofactor. The cofactor is Co(2+). Mn(2+) is required as a cofactor. Fe(2+) serves as cofactor.

It is found in the cytoplasm. It catalyses the reaction Release of N-terminal amino acids, preferentially methionine, from peptides and arylamides.. Its function is as follows. Cotranslationally removes the N-terminal methionine from nascent proteins. The N-terminal methionine is often cleaved when the second residue in the primary sequence is small and uncharged (Met-Ala-, Cys, Gly, Pro, Ser, Thr, or Val). The chain is Methionine aminopeptidase 1 (metap1) from Danio rerio (Zebrafish).